The primary structure comprises 156 residues: MPRRRVIGQRKILPDPKFKSELLAKFVNILMVDGKKSTAEKIVYTALDSMAEKSGKDHLAIFEEALENVRPAVEVKSRRVGGSTYQVPVEVRPVRRNALAMRWLVEAARKRGEKSMAQRLAAEMLDASENKGTAVKKREDVHRMADANKAFAHYRW.

It belongs to the universal ribosomal protein uS7 family. As to quaternary structure, part of the 30S ribosomal subunit. Contacts proteins S9 and S11.

One of the primary rRNA binding proteins, it binds directly to 16S rRNA where it nucleates assembly of the head domain of the 30S subunit. Is located at the subunit interface close to the decoding center, probably blocks exit of the E-site tRNA. This Vibrio campbellii (strain ATCC BAA-1116) protein is Small ribosomal subunit protein uS7.